Reading from the N-terminus, the 237-residue chain is Ribose-5-phosphate isomerase A (237 aa).

Substrate is bound by residues 30–33, 87–90, and 100–103; these read SGST, DGAD, and KGGG. Glutamate 109 acts as the Proton acceptor in catalysis. Residue lysine 127 participates in substrate binding.

It belongs to the ribose 5-phosphate isomerase family. Homodimer.

It carries out the reaction aldehydo-D-ribose 5-phosphate = D-ribulose 5-phosphate. It participates in carbohydrate degradation; pentose phosphate pathway; D-ribose 5-phosphate from D-ribulose 5-phosphate (non-oxidative stage): step 1/1. In terms of biological role, catalyzes the reversible conversion of ribose-5-phosphate to ribulose 5-phosphate. This is Ribose-5-phosphate isomerase A from Synechococcus sp. (strain RCC307).